Reading from the N-terminus, the 777-residue chain is MIVGYRSTIITLSHPKLGNGKTISSNAIFQRSCRVRCSHSTPSSMNGFEDARDRIRESFGKVELSPSSYDTAWVAMVPSKHSLNEPCFPQCLDWIIENQREDGSWGLNPSHPLLLKDSLSSTLACLLALTKWRVGDEQIKRGLGFIETQSWAIDNKDQISPLGFEIIFPSMIKSAEKLNLNLAINKRDSTIKRALQNEFTRNIEYMSEGVGELCDWKEIIKLHQRQNGSLFDSPATTAAALIYHQHDKKCYEYLNSILQQHKNWVPTMYPTKIHSLLCLVDTLQNLGVHRHFKSEIKKALDEIYRLWQQKNEQIFSNVTHCAMAFRLLRMSYYDVSSDELAEFVDEEHFFAISGKYTSHVEILELHKASQLAIDHEKDDILDKINNWTRTFMEQKLLNNGFIDRMSKKEVELALRKFYTISDLAENRRCIKSYEENNFKILKAAYRSPNIYNKDLFIFSIRNFELCQAQHQEELQQFKRWFEDYRLDQLGIAERYIHDTYLCAVIVVPEPELSDARLLYAKYVLLLTIVDDQFDSFASTDECLNIIELVERWDDYASVGYKSEKVKVFFSTLYKSIEELVTIAEIKQGRSVKNHLLNLWLELVKLMLMERVEWFSGKTIPSIEEYLYVTSITFGARLIPLTTQYFLGIKISEDILESDEIYGLCNCTGRVLRILNDLQDSKKEQKEDSVTIVTLLMKSMSEEEAIMKIKEILEMNRRELLKMVLVQKKGSQLPQICKDIFWRTSNWADFIYLQTDGYRIAEEMKNHIDEVFYKPLNH.

The N-terminal 36 residues, 1–36 (MIVGYRSTIITLSHPKLGNGKTISSNAIFQRSCRVR), are a transit peptide targeting the chloroplast. Mg(2+)-binding residues include Asp530 and Asp534. A DDXXD motif motif is present at residues 530-534 (DDQFD).

Belongs to the terpene synthase family. Tpse subfamily. Mg(2+) is required as a cofactor. Requires Mn(2+) as cofactor.

The protein resides in the plastid. Its subcellular location is the chloroplast. The enzyme catalyses (2Z,6Z)-farnesyl diphosphate = (+)-alpha-santalene + diphosphate. It carries out the reaction (2Z,6Z)-farnesyl diphosphate = (+)-endo-beta-bergamotene + diphosphate. The catalysed reaction is (2Z,6Z)-farnesyl diphosphate = (1S,5S,6S)-alpha-bergamotene + diphosphate. Its function is as follows. (2Z,6Z)-farnesyl diphosphate cyclizing enzyme. Produces (+)-alpha-santalene, (+)-endo-beta-bergamotene, (-)-endo-alpha-bergamotene, and at lower amounts, (-)exo-alpha-bergamotene and (+)-epi-beta-santalene. Not able to use geranyl diphosphate, E,E-farnesyl diphosphate or E,E,E-geranylgeranyl diphosphate as substrates, but able to use Neryl diphosphate to make the monoterpene terpineol. The sequence is that of Santalene and bergamotene synthase, chloroplastic (SBS) from Solanum habrochaites (Wild tomato).